The primary structure comprises 968 residues: Glycine dehydrogenase (decarboxylating) (968 aa).

Position 712 is an N6-(pyridoxal phosphate)lysine (K712).

This sequence belongs to the GcvP family. The glycine cleavage system is composed of four proteins: P, T, L and H. Pyridoxal 5'-phosphate is required as a cofactor.

The enzyme catalyses N(6)-[(R)-lipoyl]-L-lysyl-[glycine-cleavage complex H protein] + glycine + H(+) = N(6)-[(R)-S(8)-aminomethyldihydrolipoyl]-L-lysyl-[glycine-cleavage complex H protein] + CO2. Its function is as follows. The glycine cleavage system catalyzes the degradation of glycine. The P protein binds the alpha-amino group of glycine through its pyridoxal phosphate cofactor; CO(2) is released and the remaining methylamine moiety is then transferred to the lipoamide cofactor of the H protein. The sequence is that of Glycine dehydrogenase (decarboxylating) from Prochlorococcus marinus (strain NATL2A).